A 708-amino-acid chain; its full sequence is Ribosomal RNA large subunit methyltransferase K/L (708 aa).

Residues 43–154 enclose the THUMP domain; that stretch reads QIYRCCLWSR…KENALLGIDM (112 aa).

This sequence belongs to the methyltransferase superfamily. RlmKL family.

The protein localises to the cytoplasm. It carries out the reaction guanosine(2445) in 23S rRNA + S-adenosyl-L-methionine = N(2)-methylguanosine(2445) in 23S rRNA + S-adenosyl-L-homocysteine + H(+). The catalysed reaction is guanosine(2069) in 23S rRNA + S-adenosyl-L-methionine = N(2)-methylguanosine(2069) in 23S rRNA + S-adenosyl-L-homocysteine + H(+). Functionally, specifically methylates the guanine in position 2445 (m2G2445) and the guanine in position 2069 (m7G2069) of 23S rRNA. This is Ribosomal RNA large subunit methyltransferase K/L from Vibrio cholerae serotype O1 (strain ATCC 39541 / Classical Ogawa 395 / O395).